Consider the following 103-residue polypeptide: Co-chaperonin GroES (103 aa).

This sequence belongs to the GroES chaperonin family. As to quaternary structure, heptamer of 7 subunits arranged in a ring. Interacts with the chaperonin GroEL.

The protein localises to the cytoplasm. Together with the chaperonin GroEL, plays an essential role in assisting protein folding. The GroEL-GroES system forms a nano-cage that allows encapsulation of the non-native substrate proteins and provides a physical environment optimized to promote and accelerate protein folding. GroES binds to the apical surface of the GroEL ring, thereby capping the opening of the GroEL channel. The chain is Co-chaperonin GroES from Prochlorococcus marinus subsp. pastoris (strain CCMP1986 / NIES-2087 / MED4).